The primary structure comprises 122 residues: Large ribosomal subunit protein uL14 (122 aa).

This sequence belongs to the universal ribosomal protein uL14 family. In terms of assembly, part of the 50S ribosomal subunit. Forms a cluster with proteins L3 and L19. In the 70S ribosome, L14 and L19 interact and together make contacts with the 16S rRNA in bridges B5 and B8.

In terms of biological role, binds to 23S rRNA. Forms part of two intersubunit bridges in the 70S ribosome. The protein is Large ribosomal subunit protein uL14 of Rickettsia africae (strain ESF-5).